A 361-amino-acid chain; its full sequence is 5-formaminoimidazole-4-carboxamide-1-(beta)-D-ribofuranosyl 5'-monophosphate synthetase (361 aa).

2 residues coordinate 5-amino-1-(5-phospho-beta-D-ribosyl)imidazole-4-carboxamide: His-27 and Ser-94. One can recognise an ATP-grasp domain in the interval 116 to 348 (RRILRWESER…MGQRIAREIK (233 aa)). Residues 156 to 166 (KFPGARGGRGY), 199 to 202 (EEYV), and Glu-230 contribute to the ATP site. Asn-258 serves as a coordination point for 5-amino-1-(5-phospho-beta-D-ribosyl)imidazole-4-carboxamide. Gln-297 and Glu-310 together coordinate Mg(2+).

The protein belongs to the phosphohexose mutase family. In terms of assembly, homohexamer. Dimer of trimers. Mg(2+) is required as a cofactor. The cofactor is Mn(2+).

The catalysed reaction is 5-amino-1-(5-phospho-beta-D-ribosyl)imidazole-4-carboxamide + formate + ATP = 5-formamido-1-(5-phospho-D-ribosyl)imidazole-4-carboxamide + ADP + phosphate. It participates in purine metabolism; IMP biosynthesis via de novo pathway; 5-formamido-1-(5-phospho-D-ribosyl)imidazole-4-carboxamide from 5-amino-1-(5-phospho-D-ribosyl)imidazole-4-carboxamide (formate route): step 1/1. With respect to regulation, inhibited by ADP. Functionally, catalyzes the ATP- and formate-dependent formylation of 5-aminoimidazole-4-carboxamide-1-beta-d-ribofuranosyl 5'-monophosphate (AICAR) to 5-formaminoimidazole-4-carboxamide-1-beta-d-ribofuranosyl 5'-monophosphate (FAICAR) in the absence of folates. This Methanocaldococcus jannaschii (strain ATCC 43067 / DSM 2661 / JAL-1 / JCM 10045 / NBRC 100440) (Methanococcus jannaschii) protein is 5-formaminoimidazole-4-carboxamide-1-(beta)-D-ribofuranosyl 5'-monophosphate synthetase.